Consider the following 561-residue polypeptide: Ribulokinase (561 aa).

The protein belongs to the ribulokinase family.

It carries out the reaction D-ribulose + ATP = D-ribulose 5-phosphate + ADP + H(+). It catalyses the reaction L-ribulose + ATP = L-ribulose 5-phosphate + ADP + H(+). Its pathway is carbohydrate degradation; L-arabinose degradation via L-ribulose; D-xylulose 5-phosphate from L-arabinose (bacterial route): step 2/3. The sequence is that of Ribulokinase from Shouchella clausii (strain KSM-K16) (Alkalihalobacillus clausii).